A 117-amino-acid polypeptide reads, in one-letter code: Protein GL2-INTERACTING REPRESSOR 2 (117 aa).

Positions 1 to 56 are disordered; it reads MSRRNKNGPKLELRLNLSPPPSQASQMSLVRSPNRSNTTSPSSCVSSETNQEENET. The EAR motif lies at 10–15; it reads KLELRL. The span at 31-49 shows a compositional bias: low complexity; it reads RSPNRSNTTSPSSCVSSET.

As to quaternary structure, interacts with GL2. Interacts with TPL.

The protein localises to the nucleus. In terms of biological role, acts as a negative regulator of root hair development redundantly with GIR1. GIR1 and GIR2 may function as adapter proteins that associate with GL2 and participate in the control of root hair formation. GIR1 and GIR2 may function as adapter proteins that associate with TPL and participate in the repression of root gene expression. The sequence is that of Protein GL2-INTERACTING REPRESSOR 2 from Arabidopsis thaliana (Mouse-ear cress).